The following is a 226-amino-acid chain: UPF0758 protein GTNG_2548 (226 aa).

Residues 104 to 226 (VIRCPEDGAK…FISLKEKGYV (123 aa)) form the MPN domain. 3 residues coordinate Zn(2+): histidine 175, histidine 177, and aspartate 188. A JAMM motif motif is present at residues 175–188 (HNHPSGDPTPSRED).

The protein belongs to the UPF0758 family.

The sequence is that of UPF0758 protein GTNG_2548 from Geobacillus thermodenitrificans (strain NG80-2).